The chain runs to 632 residues: tRNA uridine 5-carboxymethylaminomethyl modification enzyme MnmG (632 aa).

FAD is bound by residues 15–20 (GAGHAG), Ile127, and Ser182. 276–290 (GPRYCPSIEDKIVRF) is an NAD(+) binding site. Gln373 contributes to the FAD binding site.

It belongs to the MnmG family. As to quaternary structure, homodimer. Heterotetramer of two MnmE and two MnmG subunits. FAD is required as a cofactor.

It is found in the cytoplasm. Its function is as follows. NAD-binding protein involved in the addition of a carboxymethylaminomethyl (cmnm) group at the wobble position (U34) of certain tRNAs, forming tRNA-cmnm(5)s(2)U34. This is tRNA uridine 5-carboxymethylaminomethyl modification enzyme MnmG from Streptococcus pyogenes serotype M2 (strain MGAS10270).